We begin with the raw amino-acid sequence, 230 residues long: Orotidine 5'-phosphate decarboxylase (230 aa).

Residues Asp12, Lys34, 61 to 70, Thr116, Arg177, Gln186, and Arg207 each bind substrate; that span reads DMKLLDIDNT. Lys63 functions as the Proton donor in the catalytic mechanism.

The protein belongs to the OMP decarboxylase family. Type 1 subfamily. As to quaternary structure, homodimer.

It carries out the reaction orotidine 5'-phosphate + H(+) = UMP + CO2. It functions in the pathway pyrimidine metabolism; UMP biosynthesis via de novo pathway; UMP from orotate: step 2/2. Its function is as follows. Catalyzes the decarboxylation of orotidine 5'-monophosphate (OMP) to uridine 5'-monophosphate (UMP). The chain is Orotidine 5'-phosphate decarboxylase from Rhizobium rhizogenes (strain K84 / ATCC BAA-868) (Agrobacterium radiobacter).